The primary structure comprises 247 residues: Chymase (247 aa).

The N-terminal stretch at Met-1–Ala-19 is a signal peptide. The propeptide at Gly-20–Glu-21 is activation peptide. The 224-residue stretch at Ile-22–Arg-245 folds into the Peptidase S1 domain. Cys-51 and Cys-67 are oxidised to a cystine. Catalysis depends on His-66, which acts as the Charge relay system. Residue Asn-80 is glycosylated (N-linked (GlcNAc...) asparagine). Residue Asp-110 is the Charge relay system of the active site. 2 cysteine pairs are disulfide-bonded: Cys-144–Cys-209 and Cys-175–Cys-188. Catalysis depends on Ser-203, which acts as the Charge relay system.

The protein belongs to the peptidase S1 family. Granzyme subfamily. As to expression, mast cells.

The protein localises to the secreted. The protein resides in the cytoplasmic granule. The enzyme catalyses Preferential cleavage: Phe-|-Xaa &gt; Tyr-|-Xaa &gt; Trp-|-Xaa &gt; Leu-|-Xaa.. Major secreted protease of mast cells with suspected roles in vasoactive peptide generation, extracellular matrix degradation, and regulation of gland secretion. In Mus musculus (Mouse), this protein is Chymase (Cma1).